A 317-amino-acid chain; its full sequence is Non-structural protein 2 (317 aa).

ATP-binding positions include 107 to 109 (SVR), K188, and 221 to 223 (HGK). The segment at 205 to 241 (LVAELRWQYNRFAVITHGKGHYRVVKYSSVANHADRV) is RNA-binding. H225 functions as the For NTPase and RTPase activities in the catalytic mechanism. Position 227 (R227) interacts with ATP.

Belongs to the rotavirus NSP2 family. Homooctamer. Interacts with VP1; this interaction is weak. Interacts with NSP5; this interaction leads to up-regulation of NSP5 phosphorylation and formation of viral factories. Interacts with host DCP1A, DCP1B, DDX6, EDC4 and EIF2S1/eIF2-alpha; these interactions are probably part of the sequestration of some host SGs and PBs proteins in viral factories. Mg(2+) is required as a cofactor.

The protein localises to the host cytoplasm. Its function is as follows. Participates in replication and packaging of the viral genome. Plays a crucial role, together with NSP5, in the formation of virus factories (viroplasms), which are large inclusions in the host cytoplasm where replication intermediates are assembled and viral RNA replication takes place. Displays ssRNA binding, NTPase, RNA triphosphatase (RTPase) and ATP-independent helix-unwinding activities. The unwinding activity may prepare and organize plus-strand RNAs for packaging and replication by removing interfering secondary structures. The RTPase activity plays a role in the removal of the gamma-phosphate from the rotavirus RNA minus strands of dsRNA genome segments. Participates in the selective exclusion of host proteins from stress granules (SG) and P bodies (PB). Also participates in the sequestration of these remodeled organelles in viral factories. In Rotavirus A (strain RVA/Human/United States/Wa/1974/G1P1A[8]) (RV-A), this protein is Non-structural protein 2.